Consider the following 326-residue polypeptide: Tagatose 1,6-diphosphate aldolase 2 (326 aa).

This sequence belongs to the aldolase LacD family.

It carries out the reaction D-tagatofuranose 1,6-bisphosphate = D-glyceraldehyde 3-phosphate + dihydroxyacetone phosphate. The protein operates within carbohydrate metabolism; D-tagatose 6-phosphate degradation; D-glyceraldehyde 3-phosphate and glycerone phosphate from D-tagatose 6-phosphate: step 2/2. The polypeptide is Tagatose 1,6-diphosphate aldolase 2 (lacD2) (Streptococcus agalactiae serotype III (strain NEM316)).